A 270-amino-acid chain; its full sequence is Formamidopyrimidine-DNA glycosylase (270 aa).

The active-site Schiff-base intermediate with DNA is Pro-2. The active-site Proton donor is the Glu-3. The active-site Proton donor; for beta-elimination activity is the Lys-58. DNA contacts are provided by His-91, Arg-110, and Arg-151. The FPG-type zinc finger occupies 236-270 (FVYGRGGQPCKVCGTELREVKLGQRASVFCPKCQR). The Proton donor; for delta-elimination activity role is filled by Arg-260.

The protein belongs to the FPG family. As to quaternary structure, monomer. Requires Zn(2+) as cofactor.

It catalyses the reaction Hydrolysis of DNA containing ring-opened 7-methylguanine residues, releasing 2,6-diamino-4-hydroxy-5-(N-methyl)formamidopyrimidine.. The enzyme catalyses 2'-deoxyribonucleotide-(2'-deoxyribose 5'-phosphate)-2'-deoxyribonucleotide-DNA = a 3'-end 2'-deoxyribonucleotide-(2,3-dehydro-2,3-deoxyribose 5'-phosphate)-DNA + a 5'-end 5'-phospho-2'-deoxyribonucleoside-DNA + H(+). Involved in base excision repair of DNA damaged by oxidation or by mutagenic agents. Acts as a DNA glycosylase that recognizes and removes damaged bases. Has a preference for oxidized purines, such as 7,8-dihydro-8-oxoguanine (8-oxoG). Has AP (apurinic/apyrimidinic) lyase activity and introduces nicks in the DNA strand. Cleaves the DNA backbone by beta-delta elimination to generate a single-strand break at the site of the removed base with both 3'- and 5'-phosphates. This chain is Formamidopyrimidine-DNA glycosylase, found in Pseudomonas entomophila (strain L48).